The primary structure comprises 610 residues: Glutamine--fructose-6-phosphate aminotransferase [isomerizing] (610 aa).

The active-site Nucleophile; for GATase activity is the C2. A Glutamine amidotransferase type-2 domain is found at C2–D217. SIS domains are found at residues I284 to S424 and L453 to P600. K605 (for Fru-6P isomerization activity) is an active-site residue.

As to quaternary structure, homodimer.

It is found in the cytoplasm. The enzyme catalyses D-fructose 6-phosphate + L-glutamine = D-glucosamine 6-phosphate + L-glutamate. Catalyzes the first step in hexosamine metabolism, converting fructose-6P into glucosamine-6P using glutamine as a nitrogen source. This is Glutamine--fructose-6-phosphate aminotransferase [isomerizing] from Clostridium perfringens (strain 13 / Type A).